The sequence spans 145 residues: Transcription antitermination protein NusB (145 aa).

It belongs to the NusB family.

Involved in transcription antitermination. Required for transcription of ribosomal RNA (rRNA) genes. Binds specifically to the boxA antiterminator sequence of the ribosomal RNA (rrn) operons. This is Transcription antitermination protein NusB from Burkholderia mallei (strain NCTC 10247).